The chain runs to 324 residues: Thiamine thiazole synthase (324 aa).

Residues C86, 107 to 108 (EA), G115, and V180 each bind substrate. C213 carries the 2,3-didehydroalanine (Cys) modification. Residues D215, H230, M282, and 292 to 294 (RMG) contribute to the substrate site.

It belongs to the THI4 family. Homooctamer. Requires Fe cation as cofactor. In terms of processing, during the catalytic reaction, a sulfide is transferred from Cys-213 to a reaction intermediate, generating a dehydroalanine residue.

It localises to the cytoplasm. It is found in the nucleus. The enzyme catalyses [ADP-thiazole synthase]-L-cysteine + glycine + NAD(+) = [ADP-thiazole synthase]-dehydroalanine + ADP-5-ethyl-4-methylthiazole-2-carboxylate + nicotinamide + 3 H2O + 2 H(+). Involved in biosynthesis of the thiamine precursor thiazole. Catalyzes the conversion of NAD and glycine to adenosine diphosphate 5-(2-hydroxyethyl)-4-methylthiazole-2-carboxylic acid (ADT), an adenylated thiazole intermediate. The reaction includes an iron-dependent sulfide transfer from a conserved cysteine residue of the protein to a thiazole intermediate. The enzyme can only undergo a single turnover, which suggests it is a suicide enzyme. May have additional roles in adaptation to various stress conditions and in DNA damage tolerance. The chain is Thiamine thiazole synthase (sti35) from Fusarium solani subsp. phaseoli (Nectria haematococca).